The sequence spans 309 residues: tRNA uridine(34) hydroxylase (309 aa).

One can recognise a Rhodanese domain in the interval 126–220; that stretch reads SDPEVIVIDT…YLEQIPPEES (95 aa). C180 serves as the catalytic Cysteine persulfide intermediate.

The protein belongs to the TrhO family.

It catalyses the reaction uridine(34) in tRNA + AH2 + O2 = 5-hydroxyuridine(34) in tRNA + A + H2O. Its function is as follows. Catalyzes oxygen-dependent 5-hydroxyuridine (ho5U) modification at position 34 in tRNAs. The sequence is that of tRNA uridine(34) hydroxylase from Nostoc sp. (strain PCC 7120 / SAG 25.82 / UTEX 2576).